The chain runs to 200 residues: Charged multivesicular body protein 6 (200 aa).

Gly-2 carries the N-myristoyl glycine lipid modification. Residues 10–94 adopt a coiled-coil conformation; the sequence is RSRVTEQDKA…ERMVQDIEFT (85 aa). Positions 168–179 match the Type-2 MIT-interacting motif motif; that stretch reads LELPDVPSEPLP. Residues 169–200 are disordered; it reads ELPDVPSEPLPEEPPEATPVKNRPKPELVAAS.

Belongs to the SNF7 family. In terms of assembly, probable core component of the endosomal sorting required for transport complex III (ESCRT-III). ESCRT-III components are thought to multimerize to form a flat lattice on the perimeter membrane of the endosome.

The protein resides in the endomembrane system. Its subcellular location is the late endosome membrane. Its function is as follows. Probable core component of the endosomal sorting required for transport complex III (ESCRT-III) which is involved in multivesicular bodies (MVBs) formation and sorting of endosomal cargo proteins into MVBs. MVBs contain intraluminal vesicles (ILVs) that are generated by invagination and scission from the limiting membrane of the endosome and mostly are delivered to lysosomes enabling degradation of membrane proteins, such as stimulated growth factor receptors, lysosomal enzymes and lipids. In the ESCRT-III complex, it probably serves as an acceptor for the ESCRT-II complex on endosomal membranes. The polypeptide is Charged multivesicular body protein 6 (CHMP6) (Gallus gallus (Chicken)).